We begin with the raw amino-acid sequence, 251 residues long: MTVKKIAILYTDEDNEWSKPWGNFVDMAIKLLEQTRKLECIAEDVEYEVFHVQKNVFPQLSDLQKDEYLGIYITGSKYDSFDNEIEWIMKLRSFLNEMLTSKTEYPPVAGICFGHQVIAAALGSSVGRNPKGFEGGVVSLKLNSVGQKLFGAQELNLSEVHSDCVFDVPEGYQNWASSEKCQNQGFYRQNRVLTFQGHPEFNSDVAQKGLLKSQDKLTLEEFNRYERQCQELDNNGIQAARNIWRLFLQKI.

A Glutamine amidotransferase type-1 domain is found at 48-232; it reads EVFHVQKNVF…NRYERQCQEL (185 aa). Residues Cys112, His198, and Glu200 each act as for GATase activity in the active site.

The protein resides in the cytoplasm. May have a role in copper and iron homeostasis. This Saccharomyces cerevisiae (strain ATCC 204508 / S288c) (Baker's yeast) protein is Putative glutamine amidotransferase YLR126C.